Reading from the N-terminus, the 648-residue chain is MSDAVTDADGSSAQSHAQSAGHHAVQGHGGHSQGPLLKLAVGAIGVVFGDIGTSPLYALRDTFAGHHKLPLDLLHIYGIISLMFWSMMIIVTFKYVSVIMRADNKGEGGSLALLALINQHTDGKRWGRGIILLGVFATALFYGDSMITPAVSVMGAIEGVAVYRPDMHPLIVPLVVGILIGLFFIQSRGTEKVAAFFGPIMLVYFGTIAVLGALSIAEYPPVIAALSPHHAVTMFIADPWRGFLAMGAAVLAVTGAEALYADMGHFGRSPIRMSWLVFVLPALVLNYLGQASLLIRNPAALESPFYYLAPEWFQWPLLFIASCAAVIASQAVISGAFSVTQQAIQLGFIPRMTIKHTSTAAGQIFIPVINWALMIAVILLVLVFQRSSNLTAAYGIAVTGAMLIDNFLLAVVLFKLWQWKAPAAIAMLAVFFAIDAAYLGANMTKIPDGGWVPLVMGIAIFTLLTTWSRGRALMRENMAEGTIPLDVFTKSAHSSAARVSGTAIFMASTAAGVPSALLHNIKHNKVLHERVVILTVSIEDVPYVDEGERYSVKDFGNGFYRLTLRFGFLEETDVPGALKGVSMCGEPFNMMKTSFFLSRQTLIPSDKPGMALWREKLFAWMLRNAASAMEFFRLPTNRVVELGSQLKI.

Residues 1-31 (MSDAVTDADGSSAQSHAQSAGHHAVQGHGGH) are disordered. The segment covering 10–26 (GSSAQSHAQSAGHHAVQ) has biased composition (low complexity). The next 12 membrane-spanning stretches (helical) occupy residues 39-59 (LAVGAIGVVFGDIGTSPLYAL), 73-93 (LLHIYGIISLMFWSMMIIVTF), 130-150 (IILLGVFATALFYGDSMITPA), 165-185 (PDMHPLIVPLVVGILIGLFFI), 193-213 (VAAFFGPIMLVYFGTIAVLGA), 243-263 (FLAMGAAVLAVTGAEALYADM), 275-295 (WLVFVLPALVLNYLGQASLLI), 317-337 (LLFIASCAAVIASQAVISGAF), 364-384 (IFIPVINWALMIAVILLVLVF), 394-414 (YGIAVTGAMLIDNFLLAVVLF), 421-441 (APAAIAMLAVFFAIDAAYLGA), and 446-466 (IPDGGWVPLVMGIAIFTLLTT).

Belongs to the HAK/KUP transporter (TC 2.A.72) family.

The protein resides in the cell inner membrane. It carries out the reaction K(+)(in) + H(+)(in) = K(+)(out) + H(+)(out). Its function is as follows. Transport of potassium into the cell. Likely operates as a K(+):H(+) symporter. This Novosphingobium aromaticivorans (strain ATCC 700278 / DSM 12444 / CCUG 56034 / CIP 105152 / NBRC 16084 / F199) protein is Probable potassium transport system protein Kup 1.